Reading from the N-terminus, the 317-residue chain is Transaldolase (317 aa).

Lys132 functions as the Schiff-base intermediate with substrate in the catalytic mechanism.

Belongs to the transaldolase family. Type 1 subfamily. As to quaternary structure, homodimer.

Its subcellular location is the cytoplasm. It catalyses the reaction D-sedoheptulose 7-phosphate + D-glyceraldehyde 3-phosphate = D-erythrose 4-phosphate + beta-D-fructose 6-phosphate. It functions in the pathway carbohydrate degradation; pentose phosphate pathway; D-glyceraldehyde 3-phosphate and beta-D-fructose 6-phosphate from D-ribose 5-phosphate and D-xylulose 5-phosphate (non-oxidative stage): step 2/3. Transaldolase is important for the balance of metabolites in the pentose-phosphate pathway. The chain is Transaldolase from Photorhabdus laumondii subsp. laumondii (strain DSM 15139 / CIP 105565 / TT01) (Photorhabdus luminescens subsp. laumondii).